A 358-amino-acid polypeptide reads, in one-letter code: tRNA-specific 2-thiouridylase MnmA 2 (358 aa).

ATP-binding positions include 11–18 (GMSGGVDS) and Met37. Cys106 serves as the catalytic Nucleophile. A disulfide bond links Cys106 and Cys202. ATP is bound at residue Gly130. An interaction with tRNA region spans residues 152–154 (KDQ). Residue Cys202 is the Cysteine persulfide intermediate of the active site. The tract at residues 308–309 (RY) is interaction with tRNA.

It belongs to the MnmA/TRMU family.

It localises to the cytoplasm. It carries out the reaction S-sulfanyl-L-cysteinyl-[protein] + uridine(34) in tRNA + AH2 + ATP = 2-thiouridine(34) in tRNA + L-cysteinyl-[protein] + A + AMP + diphosphate + H(+). Its function is as follows. Catalyzes the 2-thiolation of uridine at the wobble position (U34) of tRNA, leading to the formation of s(2)U34. In Clostridium tetani (strain Massachusetts / E88), this protein is tRNA-specific 2-thiouridylase MnmA 2.